Consider the following 151-residue polypeptide: ATP synthase subunit b' (151 aa).

Residues 18 to 38 form a helical membrane-spanning segment; the sequence is TLPLMALQVVLLTFILNALFF.

Belongs to the ATPase B chain family. F-type ATPases have 2 components, F(1) - the catalytic core - and F(0) - the membrane proton channel. F(1) has five subunits: alpha(3), beta(3), gamma(1), delta(1), epsilon(1). F(0) has four main subunits: a(1), b(1), b'(1) and c(10-14). The alpha and beta chains form an alternating ring which encloses part of the gamma chain. F(1) is attached to F(0) by a central stalk formed by the gamma and epsilon chains, while a peripheral stalk is formed by the delta, b and b' chains.

The protein localises to the cellular thylakoid membrane. F(1)F(0) ATP synthase produces ATP from ADP in the presence of a proton or sodium gradient. F-type ATPases consist of two structural domains, F(1) containing the extramembraneous catalytic core and F(0) containing the membrane proton channel, linked together by a central stalk and a peripheral stalk. During catalysis, ATP synthesis in the catalytic domain of F(1) is coupled via a rotary mechanism of the central stalk subunits to proton translocation. Its function is as follows. Component of the F(0) channel, it forms part of the peripheral stalk, linking F(1) to F(0). The b'-subunit is a diverged and duplicated form of b found in plants and photosynthetic bacteria. The chain is ATP synthase subunit b' from Prochlorococcus marinus (strain MIT 9303).